Reading from the N-terminus, the 311-residue chain is E3 ubiquitin-protein ligase RNF126 (311 aa).

Alanine 2 bears the N-acetylalanine mark. Phosphoserine is present on serine 5. A required for interaction with BAG6 region spans residues 5–100; that stretch reads SPHPGRYFCH…FEIPTFPPGA (96 aa). The Zn(2+) site is built by cysteine 13, cysteine 16, cysteine 29, and cysteine 32. The C4-type zinc finger occupies 13 to 32; sequence CHCCSVEIVPRLPDYICPRC. Disordered regions lie at residues 42-64 and 94-132; these read EETR…SRPP and PTFP…ARLT. The segment covering 47-61 has biased composition (polar residues); it reads TENGSAPSTAPTDQS. Over residues 103–116 the composition is skewed to basic and acidic residues; that stretch reads DDGRDPESRRERDH. Over residues 117–132 the composition is skewed to basic residues; that stretch reads PSRHRYGARQPRARLT. Residues 200-304 are sufficient for interaction with AICDA; that stretch reads TGPPPADKEK…SSSSSSSPSN (105 aa). An RING-type zinc finger spans residues 229 to 270; that stretch reads CPVCKDDYALGERVRQLPCNHLFHDGCIVPWLEQHDSCPVCR. The tract at residues 277 to 311 is disordered; sequence NTATNPPGLTGVSFSSSSSSSSSSSPSNENATSNS. Residues 289-311 show a composition bias toward low complexity; sequence SFSSSSSSSSSSSPSNENATSNS.

Interacts with CCDC50, EGFR, FLT3 and SCAMP3. Interacts with BAG6 (via ubiquitin-like domain); required for BAG6-dependent ubiquitination of proteins mislocalized to the cytosol. Interacts with CDKN1A. Interacts with AICDA. In terms of processing, ubiquitinated. May undergo autoubiquitination. As to expression, highly expressed in liver and testis.

The protein localises to the cytoplasm. The protein resides in the nucleus. The catalysed reaction is S-ubiquitinyl-[E2 ubiquitin-conjugating enzyme]-L-cysteine + [acceptor protein]-L-lysine = [E2 ubiquitin-conjugating enzyme]-L-cysteine + N(6)-ubiquitinyl-[acceptor protein]-L-lysine.. The protein operates within protein modification; protein ubiquitination. Functionally, E3 ubiquitin-protein ligase that mediates ubiquitination oF target proteins. Depending on the associated E2 ligase, mediates 'Lys-27'-, 'Lys-29'-, 'Lys-48'- and/or 'Lys-63'-linked polyubiquitination of substrates. Part of a BAG6-dependent quality control process ensuring that proteins of the secretory pathway that are mislocalized to the cytosol are degraded by the proteasome. Probably acts by providing the ubiquitin ligase activity associated with the BAG6 complex and be responsible for ubiquitination of the hydrophobic mislocalized proteins and their targeting to the proteasome. May also play a role in the endosomal recycling of IGF2R, the cation-independent mannose-6-phosphate receptor. May play a role in the endosomal sorting and degradation of several membrane receptors including EGFR, FLT3, MET and CXCR4, by mediating their ubiquitination. By ubiquitinating CDKN1A/p21 and targeting it for degradation, may also promote cell proliferation. May monoubiquitinate AICDA. Acts as a regulator of DNA repair by mediating 'Lys-27'- and 'Lys-29'-linked polyubiquitination of MRE11, thereby promoting the exonuclease activity of MRE11. The chain is E3 ubiquitin-protein ligase RNF126 from Homo sapiens (Human).